Consider the following 104-residue polypeptide: Hydrogen cyanide synthase subunit HcnA (104 aa).

Residues 16 to 97 (ADMTIHLNGQ…GMRVETESNR (82 aa)) enclose the 2Fe-2S ferredoxin-type domain. Residues C60, C65, C68, and C81 each coordinate [2Fe-2S] cluster.

In terms of assembly, heterotrimer of HcnA, HcnB and HcnC.

It is found in the cell membrane. The catalysed reaction is glycine + 2 A = hydrogen cyanide + 2 AH2 + CO2. Its activity is regulated as follows. Oxygen is necessary for cyanogenesis. Activated by succinate, glycine methyl ester, glucose and D,L-methionine in addition to glycine. Phenazine methosulfate, methylene blue, 2,6-dichlorophenolindophenol (DCIP) and ferricyanide can replace oxygen for the reaction. Inhibited by pyrrolnitrin and acriflavine at 1 mM concentration. Its function is as follows. A three-component membrane-bound flavoenzyme that catalyzes the formation of hydrogen cyanide, a secondary metabolite, by transfer of electrons to a cyanide-resistant branch of the aerobic respiratory chain. In Pseudomonas aeruginosa (strain ATCC 15692 / DSM 22644 / CIP 104116 / JCM 14847 / LMG 12228 / 1C / PRS 101 / PAO1), this protein is Hydrogen cyanide synthase subunit HcnA.